The following is a 729-amino-acid chain: Methionine--tRNA ligase (729 aa).

The 'HIGH' region motif lies at 12 to 22 (PYVNNIPHLGN). Cys-143, Cys-146, Cys-155, and Cys-158 together coordinate Zn(2+). Positions 330-334 (KFSKS) match the 'KMSKS' region motif. Lys-333 contacts ATP. In terms of domain architecture, tRNA-binding spans 565–670 (FSEQVCLKVV…DNPIPGERII (106 aa)).

Belongs to the class-I aminoacyl-tRNA synthetase family. MetG type 1 subfamily. As to quaternary structure, homodimer. Zn(2+) is required as a cofactor.

The protein resides in the cytoplasm. The catalysed reaction is tRNA(Met) + L-methionine + ATP = L-methionyl-tRNA(Met) + AMP + diphosphate. In terms of biological role, is required not only for elongation of protein synthesis but also for the initiation of all mRNA translation through initiator tRNA(fMet) aminoacylation. The chain is Methionine--tRNA ligase from Borrelia hermsii (strain HS1 / DAH).